The following is a 379-amino-acid chain: Protein RecA (379 aa).

The tract at residues 1 to 24 (MSVDVKSAQSSKSDSLQAEPRPGE) is disordered. The span at 7 to 16 (SAQSSKSDSL) shows a compositional bias: polar residues. 84–91 (GPESSGKT) is a binding site for ATP.

Belongs to the RecA family.

It localises to the cytoplasm. Its function is as follows. Can catalyze the hydrolysis of ATP in the presence of single-stranded DNA, the ATP-dependent uptake of single-stranded DNA by duplex DNA, and the ATP-dependent hybridization of homologous single-stranded DNAs. It interacts with LexA causing its activation and leading to its autocatalytic cleavage. The chain is Protein RecA from Prochlorococcus marinus (strain MIT 9303).